The chain runs to 332 residues: Glycerol-3-phosphate dehydrogenase [NAD(P)+] (332 aa).

Residues W11, R30, and K108 each coordinate NADPH. Sn-glycerol 3-phosphate is bound by residues K108, G137, and S139. A141 serves as a coordination point for NADPH. Residues K192, D245, S255, R256, and N257 each contribute to the sn-glycerol 3-phosphate site. The active-site Proton acceptor is K192. R256 is a binding site for NADPH. V280 and E282 together coordinate NADPH.

Belongs to the NAD-dependent glycerol-3-phosphate dehydrogenase family.

The protein localises to the cytoplasm. It carries out the reaction sn-glycerol 3-phosphate + NAD(+) = dihydroxyacetone phosphate + NADH + H(+). The catalysed reaction is sn-glycerol 3-phosphate + NADP(+) = dihydroxyacetone phosphate + NADPH + H(+). The protein operates within membrane lipid metabolism; glycerophospholipid metabolism. Catalyzes the reduction of the glycolytic intermediate dihydroxyacetone phosphate (DHAP) to sn-glycerol 3-phosphate (G3P), the key precursor for phospholipid synthesis. The sequence is that of Glycerol-3-phosphate dehydrogenase [NAD(P)+] from Burkholderia thailandensis (strain ATCC 700388 / DSM 13276 / CCUG 48851 / CIP 106301 / E264).